Consider the following 246-residue polypeptide: Probable transcriptional regulatory protein CLL_A1008 (246 aa).

It belongs to the TACO1 family.

It is found in the cytoplasm. This chain is Probable transcriptional regulatory protein CLL_A1008, found in Clostridium botulinum (strain Eklund 17B / Type B).